We begin with the raw amino-acid sequence, 433 residues long: G2/mitotic-specific cyclin-B1 (433 aa).

The segment at 19–47 (INMAGAKRVPTAPAATSKPGLRPRTALGD) is disordered. Residue Lys-73 is modified to N6-acetyllysine. Residues 93 to 116 (PVSEPVPEPEPEPEPEPVKEEKLS) are disordered. Ser-126 carries the phosphoserine; by CDK1 modification. Residue Ser-128 is modified to Phosphoserine. Phosphoserine; by PLK1 is present on Ser-133. Ser-147 is modified (phosphoserine). 2 interaction with CDK2 regions span residues 169-177 (EYVKDIYAY) and 258-261 (YEEM). Phosphothreonine is present on Thr-321.

It belongs to the cyclin family. Cyclin AB subfamily. Interacts with the CDC2 protein kinase to form a serine/threonine kinase holoenzyme complex also known as maturation promoting factor (MPF). The cyclin subunit imparts substrate specificity to the complex. Binds HEI10. Interacts with catalytically active RALBP1 and CDC2 during mitosis to form an endocytotic complex during interphase. Interacts with CCNF; interaction is required for nuclear localization. Interacts with CDK5RAP3. Interacts with RFPL4A and UBE2A. Interacts with INCA1. Ubiquitinated by the SCF(NIPA) complex during interphase, leading to its destruction. Deubiquitinated by USP22 during G2/M phase. Post-translationally, phosphorylated by PLK1 at Ser-133 on centrosomes during prophase: phosphorylation by PLK1 does not cause nuclear import. Phosphorylation at Ser-147 was also reported to be mediated by PLK1 but Ser-133 seems to be the primary phosphorylation site.

It is found in the cytoplasm. It localises to the nucleus. The protein resides in the cytoskeleton. Its subcellular location is the microtubule organizing center. The protein localises to the centrosome. Essential for the control of the cell cycle at the G2/M (mitosis) transition. This chain is G2/mitotic-specific cyclin-B1 (CCNB1), found in Homo sapiens (Human).